The chain runs to 591 residues: V-type ATP synthase alpha chain (591 aa).

Residue 232–239 (GPFGAGKT) coordinates ATP.

Belongs to the ATPase alpha/beta chains family.

It catalyses the reaction ATP + H2O + 4 H(+)(in) = ADP + phosphate + 5 H(+)(out). In terms of biological role, produces ATP from ADP in the presence of a proton gradient across the membrane. The V-type alpha chain is a catalytic subunit. The polypeptide is V-type ATP synthase alpha chain (Nitrosococcus oceani (strain ATCC 19707 / BCRC 17464 / JCM 30415 / NCIMB 11848 / C-107)).